A 193-amino-acid chain; its full sequence is Acyl carrier protein phosphodiesterase (193 aa).

This sequence belongs to the AcpH family.

It catalyses the reaction holo-[ACP] + H2O = apo-[ACP] + (R)-4'-phosphopantetheine + H(+). Converts holo-ACP to apo-ACP by hydrolytic cleavage of the phosphopantetheine prosthetic group from ACP. The protein is Acyl carrier protein phosphodiesterase of Salmonella agona (strain SL483).